We begin with the raw amino-acid sequence, 372 residues long: tRNA-specific 2-thiouridylase MnmA (372 aa).

ATP is bound by residues 16–23 (GMSGGVDS) and Met42. The interval 102 to 104 (NPD) is interaction with target base in tRNA. The active-site Nucleophile is Cys107. Cys107 and Cys205 form a disulfide bridge. ATP is bound at residue Gly132. The interval 155-157 (KDQ) is interaction with tRNA. Cys205 acts as the Cysteine persulfide intermediate in catalysis. The interval 317-318 (RY) is interaction with tRNA.

It belongs to the MnmA/TRMU family.

Its subcellular location is the cytoplasm. It catalyses the reaction S-sulfanyl-L-cysteinyl-[protein] + uridine(34) in tRNA + AH2 + ATP = 2-thiouridine(34) in tRNA + L-cysteinyl-[protein] + A + AMP + diphosphate + H(+). Catalyzes the 2-thiolation of uridine at the wobble position (U34) of tRNA, leading to the formation of s(2)U34. This chain is tRNA-specific 2-thiouridylase MnmA, found in Shewanella frigidimarina (strain NCIMB 400).